Consider the following 304-residue polypeptide: N-acetylmuramic acid 6-phosphate etherase (304 aa).

The residue at position 2 (S2) is a Phosphoserine. Residues 59–222 (AYESFQNGGR…STAVMVKIGK (164 aa)) form the SIS domain. The Proton donor role is filled by E87. Residue E118 is part of the active site.

The protein belongs to the GCKR-like family. MurNAc-6-P etherase subfamily. As to quaternary structure, homodimer.

It carries out the reaction N-acetyl-D-muramate 6-phosphate + H2O = N-acetyl-D-glucosamine 6-phosphate + (R)-lactate. It participates in amino-sugar metabolism; N-acetylmuramate degradation. Its function is as follows. Specifically catalyzes the cleavage of the D-lactyl ether substituent of MurNAc 6-phosphate, producing GlcNAc 6-phosphate and D-lactate. The chain is N-acetylmuramic acid 6-phosphate etherase from Bacillus subtilis (strain 168).